The sequence spans 137 residues: Large ribosomal subunit protein uL16 (137 aa).

Residues 1 to 17 (MLQPKRTKFRKTHKGRN) are compositionally biased toward basic residues. Residues 1–24 (MLQPKRTKFRKTHKGRNRGLANSG) are disordered.

The protein belongs to the universal ribosomal protein uL16 family. As to quaternary structure, part of the 50S ribosomal subunit.

Its function is as follows. Binds 23S rRNA and is also seen to make contacts with the A and possibly P site tRNAs. The sequence is that of Large ribosomal subunit protein uL16 from Aeromonas hydrophila subsp. hydrophila (strain ATCC 7966 / DSM 30187 / BCRC 13018 / CCUG 14551 / JCM 1027 / KCTC 2358 / NCIMB 9240 / NCTC 8049).